Here is a 561-residue protein sequence, read N- to C-terminus: Type 2 DNA topoisomerase 6 subunit B (561 aa).

ATP-binding positions include asparagine 46, aspartate 78, 99–100 (TK), 109–116 (GQQGIGIS), and lysine 471.

The protein belongs to the TOP6B family. In terms of assembly, homodimer. Heterotetramer of two Top6A and two Top6B chains.

The enzyme catalyses ATP-dependent breakage, passage and rejoining of double-stranded DNA.. Functionally, relaxes both positive and negative superturns and exhibits a strong decatenase activity. The sequence is that of Type 2 DNA topoisomerase 6 subunit B from Thermococcus gammatolerans (strain DSM 15229 / JCM 11827 / EJ3).